We begin with the raw amino-acid sequence, 714 residues long: Fatty acid oxidation complex subunit alpha (714 aa).

The enoyl-CoA hydratase stretch occupies residues Met-1–Pro-190. The interval Gly-306–His-714 is 3-hydroxyacyl-CoA dehydrogenase.

In the N-terminal section; belongs to the enoyl-CoA hydratase/isomerase family. It in the central section; belongs to the 3-hydroxyacyl-CoA dehydrogenase family. In terms of assembly, heterotetramer of two alpha chains (FadJ) and two beta chains (FadI).

It localises to the cytoplasm. The catalysed reaction is a (3S)-3-hydroxyacyl-CoA = a (2E)-enoyl-CoA + H2O. It carries out the reaction a 4-saturated-(3S)-3-hydroxyacyl-CoA = a (3E)-enoyl-CoA + H2O. It catalyses the reaction a (3S)-3-hydroxyacyl-CoA + NAD(+) = a 3-oxoacyl-CoA + NADH + H(+). The enzyme catalyses (3S)-3-hydroxybutanoyl-CoA = (3R)-3-hydroxybutanoyl-CoA. Its pathway is lipid metabolism; fatty acid beta-oxidation. Its function is as follows. Catalyzes the formation of a hydroxyacyl-CoA by addition of water on enoyl-CoA. Also exhibits 3-hydroxyacyl-CoA epimerase and 3-hydroxyacyl-CoA dehydrogenase activities. This is Fatty acid oxidation complex subunit alpha from Escherichia fergusonii (strain ATCC 35469 / DSM 13698 / CCUG 18766 / IAM 14443 / JCM 21226 / LMG 7866 / NBRC 102419 / NCTC 12128 / CDC 0568-73).